The sequence spans 863 residues: Alanine--tRNA ligase (863 aa).

The Zn(2+) site is built by His552, His556, Cys656, and His660.

Belongs to the class-II aminoacyl-tRNA synthetase family. Zn(2+) is required as a cofactor.

It is found in the cytoplasm. The enzyme catalyses tRNA(Ala) + L-alanine + ATP = L-alanyl-tRNA(Ala) + AMP + diphosphate. Functionally, catalyzes the attachment of alanine to tRNA(Ala) in a two-step reaction: alanine is first activated by ATP to form Ala-AMP and then transferred to the acceptor end of tRNA(Ala). Also edits incorrectly charged Ser-tRNA(Ala) and Gly-tRNA(Ala) via its editing domain. This chain is Alanine--tRNA ligase, found in Alcanivorax borkumensis (strain ATCC 700651 / DSM 11573 / NCIMB 13689 / SK2).